Here is a 434-residue protein sequence, read N- to C-terminus: Trehalose-phosphatase (434 aa).

Aspartate 156 and aspartate 158 together coordinate Mg(2+). Aspartate 158 serves as the catalytic Proton donor/acceptor. Position 275–277 (275–277) interacts with substrate; it reads QKK. Position 366 (aspartate 366) interacts with Mg(2+).

The protein belongs to the gob-1 trehalose phosphatase family. Mg(2+) serves as cofactor.

It catalyses the reaction alpha,alpha-trehalose 6-phosphate + H2O = alpha,alpha-trehalose + phosphate. Catalyzes the hydrolysis of trehalose 6-phosphate to trehalose and phosphate; prevents the accumulation of toxic levels of trehalose 6-phosphate. This chain is Trehalose-phosphatase (gob-1), found in Caenorhabditis briggsae.